Reading from the N-terminus, the 130-residue chain is Small ribosomal subunit protein uS8 (130 aa).

Belongs to the universal ribosomal protein uS8 family. As to quaternary structure, part of the 30S ribosomal subunit. Contacts proteins S5 and S12.

In terms of biological role, one of the primary rRNA binding proteins, it binds directly to 16S rRNA central domain where it helps coordinate assembly of the platform of the 30S subunit. The polypeptide is Small ribosomal subunit protein uS8 (Proteus mirabilis (strain HI4320)).